The following is a 407-amino-acid chain: MEITFLGTSSGVPTRTRNVSSVALRLPQRKEIWLFDCGEATQHQLLRSDLRTSQIRRIFITHMHGDHIFGLMGLLASCGLAGTVSQIDVYGPPTLDRYIASCLRWSVMRLPYKLQVHTVEPGEVFSDGEFTVTCRLLHHRVPAFGYRVTEGDRPGRFHVEKAQALGIPFGPLYGQLKQGKTITLEDGRTFDGRDFCDPPQRGRSMVYCTDTVFCDSAVELAQQADVLIHEATFSHQEANLAFARLHSTSTMAAQVAAFAQVKLLFLTHFSARYAPGNPVQVEDLLAEAQAIFPNTRLAQDFLHYAIPRDGQICAEMPPSDSPAAANIDTLEATLEPLEAQTVAADAKNAPAIAINRATRQQMQQKLGIDATTANAILERRRQQKFTCLGELERLYPQVDWSALNVLF.

Residues 1–308 (MEITFLGTSS…QDFLHYAIPR (308 aa)) form a ribonuclease Z region. Positions 62, 64, 66, 67, 139, 210, and 268 each coordinate Zn(2+). Asp66 acts as the Proton acceptor in catalysis. A unknown region spans residues 309 to 407 (DGQICAEMPP…VDWSALNVLF (99 aa)).

It belongs to the RNase Z family. In terms of assembly, homodimer. The cofactor is Zn(2+).

The enzyme catalyses Endonucleolytic cleavage of RNA, removing extra 3' nucleotides from tRNA precursor, generating 3' termini of tRNAs. A 3'-hydroxy group is left at the tRNA terminus and a 5'-phosphoryl group is left at the trailer molecule.. Its function is as follows. Zinc phosphodiesterase, which displays some tRNA 3'-processing endonuclease activity. Probably involved in tRNA maturation, by removing a 3'-trailer from precursor tRNA. This is Ribonuclease Z (rnz) from Thermosynechococcus vestitus (strain NIES-2133 / IAM M-273 / BP-1).